The chain runs to 453 residues: Retroviral integration site protein Fli-1 homolog (453 aa).

The PNT domain maps to 111-197 (PPPPNMTTNE…SHLNYLRDSS (87 aa)). Positions 201–214 (GYNTQAHTDQSSRL) are enriched in polar residues. The tract at residues 201–273 (GYNTQAHTDQ…YQILGPTSSR (73 aa)) is disordered. Over residues 215 to 226 (TAKEDPSYEAVR) the composition is skewed to basic and acidic residues. 2 stretches are compositionally biased toward polar residues: residues 230 to 239 (WGNSMSSPVT) and 246 to 273 (GTQN…TSSR). A DNA-binding region (ETS) is located at residues 282–362 (IQLWQFLLEL…HGKRYAYKFD (81 aa)).

Belongs to the ETS family.

Its subcellular location is the nucleus. The sequence is that of Retroviral integration site protein Fli-1 homolog (fli1) from Xenopus laevis (African clawed frog).